The chain runs to 483 residues: Phosphoglucosamine mutase (483 aa).

S131 serves as the catalytic Phosphoserine intermediate. Mg(2+) is bound by residues S131, D272, D274, and D276. A Phosphoserine modification is found at S131.

Belongs to the phosphohexose mutase family. Mg(2+) is required as a cofactor. In terms of processing, activated by phosphorylation.

It catalyses the reaction alpha-D-glucosamine 1-phosphate = D-glucosamine 6-phosphate. In terms of biological role, catalyzes the conversion of glucosamine-6-phosphate to glucosamine-1-phosphate. The protein is Phosphoglucosamine mutase of Magnetococcus marinus (strain ATCC BAA-1437 / JCM 17883 / MC-1).